Consider the following 224-residue polypeptide: uncharacterized protein (224 aa).

Positions methionine 1–alanine 30 are cleaved as a signal peptide. Residue asparagine 141 is glycosylated (N-linked (GlcNAc...) asparagine).

Its subcellular location is the secreted. This is an uncharacterized protein from Oryza sativa subsp. japonica (Rice).